A 231-amino-acid polypeptide reads, in one-letter code: Orotidine 5'-phosphate decarboxylase (231 aa).

Substrate-binding positions include Asp11, Lys34, 61 to 70 (DLKLHDIPNT), Thr117, Arg179, Gln188, Gly208, and Arg209. The active-site Proton donor is Lys63.

The protein belongs to the OMP decarboxylase family. Type 1 subfamily. As to quaternary structure, homodimer.

It carries out the reaction orotidine 5'-phosphate + H(+) = UMP + CO2. It functions in the pathway pyrimidine metabolism; UMP biosynthesis via de novo pathway; UMP from orotate: step 2/2. Catalyzes the decarboxylation of orotidine 5'-monophosphate (OMP) to uridine 5'-monophosphate (UMP). The chain is Orotidine 5'-phosphate decarboxylase from Streptococcus suis (strain 98HAH33).